A 215-amino-acid polypeptide reads, in one-letter code: UPF0056 membrane protein BU267 (215 aa).

Transmembrane regions (helical) follow at residues 14–34 (FFIG…FTTM), 56–76 (LILL…GISI), 81–101 (IAGG…QFIK), 120–140 (VVPL…TIVW), 150–170 (LFLC…CFEA), and 189–209 (IMGL…IGAI).

This sequence belongs to the UPF0056 (MarC) family.

Its subcellular location is the cell membrane. The sequence is that of UPF0056 membrane protein BU267 from Buchnera aphidicola subsp. Acyrthosiphon pisum (strain APS) (Acyrthosiphon pisum symbiotic bacterium).